A 298-amino-acid chain; its full sequence is Tyrosine recombinase XerC (298 aa).

Residues 1–84 enclose the Core-binding (CB) domain; sequence MNHIQDAFLN…TLRTFYEYWM (84 aa). The region spanning 105-286 is the Tyr recombinase domain; the sequence is YLPQFFYEEE…SNQQLRKVYL (182 aa). Catalysis depends on residues arginine 145, lysine 169, histidine 238, arginine 241, and histidine 264. Catalysis depends on tyrosine 273, which acts as the O-(3'-phospho-DNA)-tyrosine intermediate.

The protein belongs to the 'phage' integrase family. XerC subfamily. As to quaternary structure, forms a cyclic heterotetrameric complex composed of two molecules of XerC and two molecules of XerD.

Its subcellular location is the cytoplasm. Site-specific tyrosine recombinase, which acts by catalyzing the cutting and rejoining of the recombining DNA molecules. The XerC-XerD complex is essential to convert dimers of the bacterial chromosome into monomers to permit their segregation at cell division. It also contributes to the segregational stability of plasmids. This chain is Tyrosine recombinase XerC, found in Staphylococcus aureus (strain USA300).